A 601-amino-acid chain; its full sequence is NADH-quinone oxidoreductase subunit C/D (601 aa).

Residues 1 to 191 (MKLTRDFPHN…DPFMLDAAKQ (191 aa)) are NADH dehydrogenase I subunit C. The NADH dehydrogenase I subunit D stretch occupies residues 215–601 (DYMFLNLGPN…IDFVMSDVDR (387 aa)).

It in the N-terminal section; belongs to the complex I 30 kDa subunit family. In the C-terminal section; belongs to the complex I 49 kDa subunit family. In terms of assembly, NDH-1 is composed of 13 different subunits. Subunits NuoB, CD, E, F, and G constitute the peripheral sector of the complex.

The protein resides in the cell inner membrane. It carries out the reaction a quinone + NADH + 5 H(+)(in) = a quinol + NAD(+) + 4 H(+)(out). In terms of biological role, NDH-1 shuttles electrons from NADH, via FMN and iron-sulfur (Fe-S) centers, to quinones in the respiratory chain. The immediate electron acceptor for the enzyme in this species is believed to be ubiquinone. Couples the redox reaction to proton translocation (for every two electrons transferred, four hydrogen ions are translocated across the cytoplasmic membrane), and thus conserves the redox energy in a proton gradient. In Shewanella oneidensis (strain ATCC 700550 / JCM 31522 / CIP 106686 / LMG 19005 / NCIMB 14063 / MR-1), this protein is NADH-quinone oxidoreductase subunit C/D.